We begin with the raw amino-acid sequence, 469 residues long: Dihydroorotate dehydrogenase (quinone), mitochondrial (469 aa).

The N-terminal 37 residues, 1 to 37 (MSSSAAALAWRRSLRDALLRGSAWRGAPAANSAAARL), are a transit peptide targeting the mitochondrion. Residues 62–82 (LLTGAMIGLAIAGGAYVSTAD) form a helical membrane-spanning segment. Residues 150 to 154 (AGFDK) and serine 174 each bind FMN. Residue lysine 154 participates in substrate binding. 199 to 203 (NRCGF) contacts substrate. The segment at 219-247 (HGKRKMEETSSSTSPTTSDVKQGGKAGPG) is disordered. A compositionally biased stretch (low complexity) spans 227 to 236 (TSSSTSPTTS). The FMN site is built by asparagine 252 and asparagine 283. Position 283-288 (283-288 (NVSSPN)) interacts with substrate. Residue serine 286 is the Nucleophile of the active site. Residues lysine 328 and serine 356 each contribute to the FMN site. 357–358 (NT) provides a ligand contact to substrate. Residues glycine 380, glycine 409, and 430-431 (YT) each bind FMN.

Belongs to the dihydroorotate dehydrogenase family. Type 2 subfamily. FMN is required as a cofactor.

The protein resides in the mitochondrion inner membrane. The catalysed reaction is (S)-dihydroorotate + a quinone = orotate + a quinol. Its pathway is pyrimidine metabolism; UMP biosynthesis via de novo pathway; orotate from (S)-dihydroorotate (quinone route): step 1/1. Catalyzes the conversion of dihydroorotate to orotate with quinone as electron acceptor. This is Dihydroorotate dehydrogenase (quinone), mitochondrial (PYRD) from Oryza sativa subsp. japonica (Rice).